The primary structure comprises 1376 residues: METQLQSIFEDVVKTEVIEEAFAGMFMDSPEDEKTKLTSCLGAFRQFWSTLPQESHEQCVQWIVRFIHGQHSPKRIAFLYDCLAMAVETSLLPPRMVCQALISSDSLEWERTQLWALTFKLIRKIIGGVDYKGVRDLLKAVLDKIQTIPNFVSSAVVQQLLAAREVVEYILDRNACLLPAYFAVTEIRKLCPEGALSHWLLGSLISDFVDSFRPTARINSICGRCSLLPVVNNSGAICNSWKLDPTTLRFPLRGMLPYDKDLFDPQTGLLRYVLEQPYSRDMVCNMLGLNKQHKQRCPVLEDQLVDLVVYAMERSETEEQFDDGGTSQLLWQHLSSQLIFFVLFQFASFPHMVLSLHQKLAGRGLIKGRDHLMWVLLQFISGSIQKNALGDFLPVMKLFDLLYPEKECIPVPDINKPQSTHAFAMTCIWIHLNRKAQNDNSKLQIPIPHSLKLHHEFLQQSLRNKSLPMTDYKIALLCNAYSTNSECFTLPMGVLVETIYGNGSMRITLPGTNCMASGSVTPLPMNLLDSLTVHAKMSLIHSIATRVIKLAHAKSSLALAPALVETYSRLLVYMEIESLGIKGFISQLLPNVFKSHAWGILHTLLEMFSYRMHHIQPHYRVQLLSHLHSLAAVPQTNQNQLHLCVESTALRLITALGSSEVQPQFTRFLNDPKTVLSAESEELNRALILTLARATHVTDFFTGSDSIQGTWCKDILQTIMNFTPHNWASHTLSCFPAPLQAFFKQNNVPQESRFNLKKNVEEEYRKWKSMTNENDIITHFSMQGSPPLFLCLLWKMLLETDHINQIGFRVLERIGARALVAHVRTFADFLVYEFSTSAGGQQLNKCIEILNDMVWKYNIVTLDRLILCLAMRSHEGNEAQVCYFIIQLLLLKPNDFRNRVSDFVKENAPEHWLQSDWHTKHMTYHKKYPEKLYFEGLAEQVNPPIQLQSQYLPIYFGNVCLRFLPVFDIVIHRFLELLPVSKSLETLLDHLGGLYKFHDRPVTYLYNTLHYYERHLRDRTNLKRKLVHAIMSSLKDNRTPGWCLSETYLKCGMNAREDNVWIPDDTYYCKLIGRLVDTMAGKSPGPFPNCDWRFNEFPNPAAHALHVTCVELMALAVPGKDVGNALLNVVLKSQPLVPRENITAWMNAIGLVITALPEPYWIVLHDRIVSVISSAVLSSGSDWLGYPFQLLDFTACHQSYSEMHCSYVLALAHAVWHHSSIGQLSLIPKFLSEVLKPIVKTEFQLLYVYHLVGPFLQRFQQERTRCMLEIGVAFYEMLQAVDQHSNHLAYMDPICDFLYHIKYMFTGDSVKDQVERIICSLRPAMRLRLRFITHISKMEPAAVPVSNSSSVQQTSSASSPTAQSTAGAAIPLSVTQ.

The segment covering Ser-1346 to Ala-1369 has biased composition (low complexity). Positions Ser-1346–Gln-1376 are disordered.

The protein belongs to the Mediator complex subunit 23 family. Component of the Mediator complex.

It is found in the nucleus. In terms of biological role, component of the Mediator complex, a coactivator involved in the regulated transcription of nearly all RNA polymerase II-dependent genes. Mediator functions as a bridge to convey information from gene-specific regulatory proteins to the basal RNA polymerase II transcription machinery. Mediator is recruited to promoters by direct interactions with regulatory proteins and serves as a scaffold for the assembly of a functional preinitiation complex with RNA polymerase II and the general transcription factors. The sequence is that of Mediator of RNA polymerase II transcription subunit 23 (med23) from Danio rerio (Zebrafish).